A 347-amino-acid chain; its full sequence is Guanine nucleotide-binding protein alpha-5 subunit (347 aa).

The N-myristoyl glycine moiety is linked to residue glycine 2. Cysteine 3 carries the S-palmitoyl cysteine lipid modification. A G-alpha domain is found at 27-347; the sequence is NETKLLLLGP…KNIFNTIINY (321 aa). The segment at 30-43 is G1 motif; that stretch reads KLLLLGPGESGKST. Residues 35–42, 170–176, 195–199, 264–267, and alanine 319 contribute to the GTP site; these read GPGESGKS, LRSRVRT, DVGGQ, and NKVD. Residues serine 42 and threonine 176 each contribute to the Mg(2+) site. The segment at 168–176 is G2 motif; sequence DVLRSRVRT. Residues 191–200 are G3 motif; that stretch reads FRMLDVGGQR. The segment at 260-267 is G4 motif; sequence IIFFNKVD. Residues 317-322 form a G5 motif region; it reads TCAIDT.

This sequence belongs to the G-alpha family. G(q) subfamily. As to quaternary structure, g proteins are composed of 3 units; alpha, beta and gamma. The alpha chain contains the guanine nucleotide binding site.

Guanine nucleotide-binding proteins (G proteins) are involved as modulators or transducers in various transmembrane signaling systems. In Dictyostelium discoideum (Social amoeba), this protein is Guanine nucleotide-binding protein alpha-5 subunit (gpaE).